A 196-amino-acid chain; its full sequence is ATP-dependent Clp protease proteolytic subunit (196 aa).

The Nucleophile role is filled by serine 101. Residue histidine 126 is part of the active site.

It belongs to the peptidase S14 family. As to quaternary structure, component of the chloroplastic Clp protease core complex.

The protein resides in the plastid. The protein localises to the chloroplast stroma. It carries out the reaction Hydrolysis of proteins to small peptides in the presence of ATP and magnesium. alpha-casein is the usual test substrate. In the absence of ATP, only oligopeptides shorter than five residues are hydrolyzed (such as succinyl-Leu-Tyr-|-NHMec, and Leu-Tyr-Leu-|-Tyr-Trp, in which cleavage of the -Tyr-|-Leu- and -Tyr-|-Trp bonds also occurs).. In terms of biological role, cleaves peptides in various proteins in a process that requires ATP hydrolysis. Has a chymotrypsin-like activity. Plays a major role in the degradation of misfolded proteins. This chain is ATP-dependent Clp protease proteolytic subunit, found in Lepidium virginicum (Virginia pepperweed).